Consider the following 255-residue polypeptide: Cyclase-like protein 1 (255 aa).

An N-terminal signal peptide occupies residues 1–24 (MTRSVSFPLFLFAVVLSLSSSLLA).

Belongs to the Cyclase 1 superfamily.

It localises to the secreted. The protein localises to the extracellular space. It is found in the extracellular matrix. Functionally, acts as a negative regulator of fumonisin B1- and pathogen-induced programmed cell death (PCD), and regulates pathogen-induced symptom development. May function redundantly with CYCLASE2 for normal plant growth, development and viability. The polypeptide is Cyclase-like protein 1 (Arabidopsis thaliana (Mouse-ear cress)).